The chain runs to 440 residues: MPWPGRGHINPMLNLCKSLVRRDPNLTVTFVVTEEWLGFIGSDPKPNRIHFATLPNIIPSELVRANDFIAFIDAVLTRLEEPFEQLLDRLNSPPTAIIADTYIIWAVRVGTKRNIPVASFWTTSATILSLFINSDLLASHGHFPIEPSESKLDEIVDYIPGLSPTRLSDLQILHGYSHQVFNIFKKSFGELYKAKYLLFPSAYELEPKAIDFFTSKFDFPVYSTGPLIPLEELSVGNENRELDYFKWLDEQPESSVLYISQGSFLSVSEAQMEEIVVGVREAGVKFFWVARGGELKLKEALEGSLGVVVSWCDQLRVLCHAAIGGFWTHCGYNSTLEGICSGVPLLTFPVFWDQFLNAKMIVEEWRVGMGIERKKQMELLIVSDEIKELVKRFMDGESEEGKEMRRRTCDLSEICRGAVAKGGSSDANIDAFIKDITKIV.

UDP-alpha-D-glucose is bound by residues S263, 312 to 314 (CDQ), 329 to 337 (HCGYNSTLE), and 351 to 354 (FWDQ).

The protein belongs to the UDP-glycosyltransferase family.

This chain is UDP-glycosyltransferase 87A1 (UGT87A1), found in Arabidopsis thaliana (Mouse-ear cress).